Reading from the N-terminus, the 264-residue chain is General transcription factor IIF subunit 2 (264 aa).

This sequence belongs to the TFIIF beta subunit family. As to quaternary structure, heterodimer of an alpha and a beta subunit.

It localises to the nucleus. TFIIF is a general transcription initiation factor that binds to RNA polymerase II and helps to recruit it to the initiation complex in collaboration with TFIIB. The chain is General transcription factor IIF subunit 2 (gtf2f2) from Xenopus laevis (African clawed frog).